Here is a 239-residue protein sequence, read N- to C-terminus: Large ribosomal subunit protein uL2 (239 aa).

Residues 200 to 239 form a disordered region; the sequence is VNHPHGGKEHHIGRPSTVSRRAPPGRKVGHIAARRTGRRK. The segment covering 222-239 has biased composition (basic residues); that stretch reads PPGRKVGHIAARRTGRRK.

The protein belongs to the universal ribosomal protein uL2 family. Part of the 50S ribosomal subunit. Forms a bridge to the 30S subunit in the 70S ribosome.

Functionally, one of the primary rRNA binding proteins. Required for association of the 30S and 50S subunits to form the 70S ribosome, for tRNA binding and peptide bond formation. It has been suggested to have peptidyltransferase activity; this is somewhat controversial. Makes several contacts with the 16S rRNA in the 70S ribosome. In Thermococcus gammatolerans (strain DSM 15229 / JCM 11827 / EJ3), this protein is Large ribosomal subunit protein uL2.